Here is a 231-residue protein sequence, read N- to C-terminus: Ribose-5-phosphate isomerase A (231 aa).

Substrate-binding positions include 32–35, 85–88, and 98–101; these read TGST, DGAD, and KGGG. Glutamate 107 acts as the Proton acceptor in catalysis. Position 125 (lysine 125) interacts with substrate.

The protein belongs to the ribose 5-phosphate isomerase family. Homodimer.

It carries out the reaction aldehydo-D-ribose 5-phosphate = D-ribulose 5-phosphate. It functions in the pathway carbohydrate degradation; pentose phosphate pathway; D-ribose 5-phosphate from D-ribulose 5-phosphate (non-oxidative stage): step 1/1. Catalyzes the reversible conversion of ribose-5-phosphate to ribulose 5-phosphate. The polypeptide is Ribose-5-phosphate isomerase A (Burkholderia cenocepacia (strain ATCC BAA-245 / DSM 16553 / LMG 16656 / NCTC 13227 / J2315 / CF5610) (Burkholderia cepacia (strain J2315))).